The sequence spans 170 residues: Probable calcium-binding protein CML27 (170 aa).

A2 is modified (N-acetylalanine). 4 EF-hand domains span residues 19–54 (ANPEELKKVFDQFDSNGDGKISVLELGGVFKAMGTS), 55–85 (YTETELNRVLEEVDTDRDGYINLDEFSTLCR), 88–123 (SSAAEIRDAFDLYDQDKNGLISASELHQVLNRLGMS), and 136–159 (VDADGDGNVNFEEFQKMMTSSSLL). Positions 32, 34, 36, 38, 43, 68, 70, 72, 74, 79, 101, 103, 105, 112, 137, 139, 141, 143, and 148 each coordinate Ca(2+).

Potential calcium sensor. In Arabidopsis thaliana (Mouse-ear cress), this protein is Probable calcium-binding protein CML27 (CML27).